The chain runs to 334 residues: Protein-methionine-sulfoxide reductase catalytic subunit MsrP (334 aa).

The tat-type signal signal peptide spans 1-44 (MKKIRPLTEADVTAESAFFMQRRQVLKALGISAAALSLPSTAQA). Mo-molybdopterin-binding positions include Asn-88, 91–92 (YE), Cys-146, Thr-181, Asn-233, Arg-238, and 249–251 (GIK).

Belongs to the MsrP family. Heterodimer of a catalytic subunit (MsrP) and a heme-binding subunit (MsrQ). It depends on Mo-molybdopterin as a cofactor. Predicted to be exported by the Tat system. The position of the signal peptide cleavage has not been experimentally proven.

The protein localises to the periplasm. The catalysed reaction is L-methionyl-[protein] + a quinone + H2O = L-methionyl-(S)-S-oxide-[protein] + a quinol. The enzyme catalyses L-methionyl-[protein] + a quinone + H2O = L-methionyl-(R)-S-oxide-[protein] + a quinol. Part of the MsrPQ system that repairs oxidized periplasmic proteins containing methionine sulfoxide residues (Met-O), using respiratory chain electrons. Thus protects these proteins from oxidative-stress damage caused by reactive species of oxygen and chlorine generated by the host defense mechanisms. MsrPQ is essential for the maintenance of envelope integrity under bleach stress, rescuing a wide series of structurally unrelated periplasmic proteins from methionine oxidation, including the primary periplasmic chaperone SurA and the lipoprotein Pal. The catalytic subunit MsrP is non-stereospecific, being able to reduce both (R-) and (S-) diastereoisomers of methionine sulfoxide. In Salmonella agona (strain SL483), this protein is Protein-methionine-sulfoxide reductase catalytic subunit MsrP.